Consider the following 218-residue polypeptide: Putative copper transporter crmD (218 aa).

The next 2 helical transmembrane spans lie at 37-57 and 176-196; these read YSLT…LGVL and MLAV…GIVV.

This sequence belongs to the copper transporter (Ctr) (TC 1.A.56) family. SLC31A subfamily.

It is found in the membrane. The catalysed reaction is Cu(2+)(in) = Cu(2+)(out). Putative copper transporter; part of the crm gene cluster that mediates the biosynthesis of a yet unidentified copper-responsive metabolite. Probably involved in the transport of copper, even if it does not act as a major copper transporter. In contrast to crmA, is not involved in the biosynthesis of fumivalines or fumicicolins. This chain is Putative copper transporter crmD, found in Aspergillus fumigatus (strain ATCC MYA-4609 / CBS 101355 / FGSC A1100 / Af293) (Neosartorya fumigata).